A 355-amino-acid chain; its full sequence is UDP-N-acetylglucosamine--N-acetylmuramyl-(pentapeptide) pyrophosphoryl-undecaprenol N-acetylglucosamine transferase (355 aa).

UDP-N-acetyl-alpha-D-glucosamine contacts are provided by residues 13-15 (TGG), Asn-125, Arg-162, Ser-190, Ile-244, and Gln-289.

The protein belongs to the glycosyltransferase 28 family. MurG subfamily.

It is found in the cell inner membrane. The catalysed reaction is di-trans,octa-cis-undecaprenyl diphospho-N-acetyl-alpha-D-muramoyl-L-alanyl-D-glutamyl-meso-2,6-diaminopimeloyl-D-alanyl-D-alanine + UDP-N-acetyl-alpha-D-glucosamine = di-trans,octa-cis-undecaprenyl diphospho-[N-acetyl-alpha-D-glucosaminyl-(1-&gt;4)]-N-acetyl-alpha-D-muramoyl-L-alanyl-D-glutamyl-meso-2,6-diaminopimeloyl-D-alanyl-D-alanine + UDP + H(+). It participates in cell wall biogenesis; peptidoglycan biosynthesis. In terms of biological role, cell wall formation. Catalyzes the transfer of a GlcNAc subunit on undecaprenyl-pyrophosphoryl-MurNAc-pentapeptide (lipid intermediate I) to form undecaprenyl-pyrophosphoryl-MurNAc-(pentapeptide)GlcNAc (lipid intermediate II). This chain is UDP-N-acetylglucosamine--N-acetylmuramyl-(pentapeptide) pyrophosphoryl-undecaprenol N-acetylglucosamine transferase, found in Neisseria meningitidis serogroup C (strain 053442).